Consider the following 141-residue polypeptide: Oleosin 14.9 kDa (141 aa).

The segment covering 1-22 (MADQTRTHHEMISRDSTQEAHP) has biased composition (basic and acidic residues). Residues 1–24 (MADQTRTHHEMISRDSTQEAHPKA) are disordered. Positions 1-29 (MADQTRTHHEMISRDSTQEAHPKARQMVK) are polar. The segment at 30-141 (AATAVTAGGS…NIGVQHQQVS (112 aa)) is hydrophobic. 3 helical membrane-spanning segments follow: residues 38-58 (GSLL…LTVA), 60-80 (PLLV…ALII), and 81-101 (TGFL…SWLY).

The protein belongs to the oleosin family.

The protein resides in the lipid droplet. Its subcellular location is the membrane. May have a structural role to stabilize the lipid body during desiccation of the seed by preventing coalescence of the oil. Probably interacts with both lipid and phospholipid moieties of lipid bodies. May also provide recognition signals for specific lipase anchorage in lipolysis during seedling growth. The polypeptide is Oleosin 14.9 kDa (OL3) (Arabidopsis thaliana (Mouse-ear cress)).